Consider the following 288-residue polypeptide: HTH-type transcriptional regulator CzcR (288 aa).

An HTH lysR-type domain is found at 1-58 (MELRDLQIFKCVAHHKSITGAAKELNYVQSNVTARIKQLENELKTPLFNRHKKGVSLS). The segment at residues 18 to 37 (ITGAAKELNYVQSNVTARIK) is a DNA-binding region (H-T-H motif).

The protein belongs to the LysR transcriptional regulatory family.

The chain is HTH-type transcriptional regulator CzcR (czcR) from Bacillus subtilis (strain 168).